The following is a 352-amino-acid chain: UDP-N-acetylglucosamine--N-acetylmuramyl-(pentapeptide) pyrophosphoryl-undecaprenol N-acetylglucosamine transferase (352 aa).

UDP-N-acetyl-alpha-D-glucosamine is bound by residues S195 and Q287.

It belongs to the glycosyltransferase 28 family. MurG subfamily.

The protein localises to the cell membrane. It catalyses the reaction Mur2Ac(oyl-L-Ala-gamma-D-Glu-L-Lys-D-Ala-D-Ala)-di-trans,octa-cis-undecaprenyl diphosphate + UDP-N-acetyl-alpha-D-glucosamine = beta-D-GlcNAc-(1-&gt;4)-Mur2Ac(oyl-L-Ala-gamma-D-Glu-L-Lys-D-Ala-D-Ala)-di-trans,octa-cis-undecaprenyl diphosphate + UDP + H(+). Its pathway is cell wall biogenesis; peptidoglycan biosynthesis. Its function is as follows. Cell wall formation. Catalyzes the transfer of a GlcNAc subunit on undecaprenyl-pyrophosphoryl-MurNAc-pentapeptide (lipid intermediate I) to form undecaprenyl-pyrophosphoryl-MurNAc-(pentapeptide)GlcNAc (lipid intermediate II). In Streptococcus pneumoniae (strain Hungary19A-6), this protein is UDP-N-acetylglucosamine--N-acetylmuramyl-(pentapeptide) pyrophosphoryl-undecaprenol N-acetylglucosamine transferase.